We begin with the raw amino-acid sequence, 751 residues long: MTGGPIASWRTAAQGHLTPDENGDLKTDYSRWRLLDDRGRQTWHYLESDEENEKWPQSVADKHFLGLPTVTPLAPAATNRMFAIHELPELPKAKTPLQCAENGLEFFSKLQLPPGNWACEYGGPMFLLPGLIITYYVTNTPIPPEYATEIKRYLFARQHPEDGGWGLHIEAHSSVFGTCMNYVALRLIGVSEDDPRMIKARGLLHKFGGAIYGPHWAKFWLSVLGVMEWECVNPVPPELWLLPDWVPFTPWRWWIHIRQVFLPMSYLWSKKFTHPLDPLTKQLRQELYTQPYDSISFANHRNSIHAADNYYPKTWLLNLINQLLVSVWNPYFRIPALVKRAEEWTWELIRMEDENTDYAGLGPVSNPMNMVACYLHDGPDSYSVRRHRERLNDYMWMKNEGMLMNGTNGVQVWDTAFITQAIVVAGFADDPKWRPMLTKALEFLEDHQLRENVPDQEKCYRQHRKGAWPFSNKTQGYTVSDCTAEGLRSTIQLQEMHNYPRLISVERLKDSVDCLLLMQNPSGGFTEYETTRGSEKLEWLNAAEVFGGIMIGYDYPECTTASVTALSLFSRFYPDYRADEIKAAKDKAVKYIKRVQRPDGSWYGSWGICFTYAAMFALESLASVGETYETSEYARRGCEFLLSKQKEDGGWGESYLSSEKHVYVQHEKSQVVQTAWACLALMEAEYPHKEPLQKAMKLLMSRQQPNGEWLQESIEGVFNQSCMISYPNYKFYWPIRALGLYSRKFGNEELM.

Residues Met-1–Asn-22 are disordered. One copy of the PFTB 1 repeat lies at Ala-147 to Gly-189. Asp-481 functions as the Proton donor in the catalytic mechanism. PFTB repeat units lie at residues Leu-508–Tyr-553, Lys-585–Gly-625, and Ala-634–Ala-675.

Belongs to the terpene cyclase/mutase family.

It localises to the lipid droplet. The protein localises to the endoplasmic reticulum membrane. The enzyme catalyses (S)-2,3-epoxysqualene = lanosterol. The protein operates within steroid metabolism; ergosterol biosynthesis. In terms of biological role, lanosterol synthase; part of the third module of ergosterol biosynthesis pathway that includes the late steps of the pathway. ERG7A and ERG7B catalyze the cyclization of (S)-2,3 oxidosqualene to lanosterol, a reaction that forms the sterol core. The third module or late pathway involves the ergosterol synthesis itself through consecutive reactions that mainly occur in the endoplasmic reticulum (ER) membrane. Firstly, the squalene synthase erg9 catalyzes the condensation of 2 farnesyl pyrophosphate moieties to form squalene, which is the precursor of all steroids. Squalene synthase is crucial for balancing the incorporation of farnesyl diphosphate (FPP) into sterol and nonsterol isoprene synthesis. Secondly, squalene is converted into lanosterol by the consecutive action of the squalene epoxidase erg1 and the lanosterol synthase erg7. Then, the delta(24)-sterol C-methyltransferase erg6 methylates lanosterol at C-24 to produce eburicol. Eburicol is the substrate of the sterol 14-alpha demethylase encoded by cyp51A and cyp51B, to yield 4,4,24-trimethyl ergosta-8,14,24(28)-trienol. The C-14 reductase erg24 then reduces the C14=C15 double bond which leads to 4,4-dimethylfecosterol. A sequence of further demethylations at C-4, involving the C-4 demethylation complex containing the C-4 methylsterol oxidases erg25A or erg25B, the sterol-4-alpha-carboxylate 3-dehydrogenase erg26 and the 3-keto-steroid reductase erg27, leads to the production of fecosterol via 4-methylfecosterol. The C-8 sterol isomerase erg2 then catalyzes the reaction which results in unsaturation at C-7 in the B ring of sterols and thus converts fecosterol to episterol. The sterol-C5-desaturase erg3B then catalyzes the introduction of a C-5 double bond in the B ring to produce 5-dehydroepisterol. The 2 other sterol-C5-desaturases, erg3A and erg3C, seem to be less important in ergosterol biosynthesis. The C-22 sterol desaturase erg5 further converts 5-dehydroepisterol into ergosta-5,7,22,24(28)-tetraen-3beta-ol by forming the C-22(23) double bond in the sterol side chain. Finally, ergosta-5,7,22,24(28)-tetraen-3beta-ol is substrate of the C-24(28) sterol reductases erg4A and erg4B to produce ergosterol. Possible alternative sterol biosynthetic pathways might exist from fecosterol to ergosterol, depending on the activities of the erg3 isoforms. This chain is Lanosterol synthase erg7A, found in Aspergillus fumigatus (strain ATCC MYA-4609 / CBS 101355 / FGSC A1100 / Af293) (Neosartorya fumigata).